The primary structure comprises 285 residues: Hydroxyethylthiazole kinase (285 aa).

A substrate-binding site is contributed by Met43. ATP-binding residues include Lys119 and Ser172. Residue Gly199 coordinates substrate.

This sequence belongs to the Thz kinase family. Mg(2+) is required as a cofactor.

It catalyses the reaction 5-(2-hydroxyethyl)-4-methylthiazole + ATP = 4-methyl-5-(2-phosphooxyethyl)-thiazole + ADP + H(+). Its pathway is cofactor biosynthesis; thiamine diphosphate biosynthesis; 4-methyl-5-(2-phosphoethyl)-thiazole from 5-(2-hydroxyethyl)-4-methylthiazole: step 1/1. Its function is as follows. Catalyzes the phosphorylation of the hydroxyl group of 4-methyl-5-beta-hydroxyethylthiazole (THZ). The protein is Hydroxyethylthiazole kinase of Desulfovibrio desulfuricans (strain ATCC 27774 / DSM 6949 / MB).